The primary structure comprises 210 residues: C4-dicarboxylate TRAP transporter small permease protein DctQ (210 aa).

4 consecutive transmembrane segments (helical) span residues 13 to 33 (EGLI…YVVL), 77 to 97 (ALFA…AGHL), 113 to 133 (VLGV…CVAS), and 160 to 180 (IGLI…EILV).

Belongs to the TRAP transporter small permease family. As to quaternary structure, the complex comprises the extracytoplasmic solute receptor protein DctP, and the two transmembrane proteins DctQ and DctM.

The protein localises to the cell inner membrane. Its function is as follows. Part of the tripartite ATP-independent periplasmic (TRAP) transport system DctPQM involved in C4-dicarboxylates uptake. This chain is C4-dicarboxylate TRAP transporter small permease protein DctQ, found in Pseudomonas aeruginosa (strain ATCC 15692 / DSM 22644 / CIP 104116 / JCM 14847 / LMG 12228 / 1C / PRS 101 / PAO1).